A 139-amino-acid polypeptide reads, in one-letter code: D-ribose pyranase (139 aa).

The Proton donor role is filled by H20. Substrate-binding positions include D28, H106, and F128–N130.

It belongs to the RbsD / FucU family. RbsD subfamily. As to quaternary structure, homodecamer.

It is found in the cytoplasm. The catalysed reaction is beta-D-ribopyranose = beta-D-ribofuranose. It participates in carbohydrate metabolism; D-ribose degradation; D-ribose 5-phosphate from beta-D-ribopyranose: step 1/2. Catalyzes the interconversion of beta-pyran and beta-furan forms of D-ribose. The protein is D-ribose pyranase of Yersinia pseudotuberculosis serotype O:1b (strain IP 31758).